Reading from the N-terminus, the 1799-residue chain is Putative neural-cadherin 2 (1799 aa).

Residues Asn13, Asn64, Asn86, Asn118, Asn195, Asn260, Asn264, Asn283, and Asn377 are each glycosylated (N-linked (GlcNAc...) asparagine). 7 Cadherin domains span residues 37 to 136 (DRFL…PPVF), 137 to 252 (DRQT…APQF), 253 to 364 (PQGI…PPQF), 368 to 485 (EWVT…VPKF), 486 to 590 (DREH…APTF), 590 to 709 (FAQD…QPGS), and 708 to 812 (GSKS…AGSM). N-linked (GlcNAc...) asparagine glycans are attached at residues Asn601, Asn793, Asn910, Asn948, and Asn969. Positions 973–1010 (QDHNCRTHLCYNGGRCVETRNGPKCVACPVGYNGPRCQ) constitute an EGF-like 1 domain. 7 disulfide bridges follow: Cys977–Cys988, Cys982–Cys997, Cys1000–Cys1009, Cys1191–Cys1217, Cys1224–Cys1239, Cys1233–Cys1248, and Cys1250–Cys1259. The Laminin G-like 1 domain maps to 1011–1217 (QSTRSFRGNG…ALARNSFPAC (207 aa)). In terms of domain architecture, EGF-like 2 spans 1220 to 1260 (TDEVCLKTEHTARCWEHGNCVASLVQAKCHCQPGWMGPGCN). Positions 1263 to 1454 (TIPTTFKAQS…TMARNLERNC (192 aa)) constitute a Laminin G-like 2 domain. 2 N-linked (GlcNAc...) asparagine glycosylation sites follow: Asn1376 and Asn1437. 4 cysteine pairs are disulfide-bonded: Cys1419-Cys1454, Cys1501-Cys1512, Cys1506-Cys1523, and Cys1525-Cys1534. Positions 1497-1535 (DRNECLDLPCLNGATCINLEPRLRYRCICPEGYWGENCE) constitute an EGF-like 3; calcium-binding domain. A helical transmembrane segment spans residues 1549 to 1569 (ALGAIFVCLIIILILALIFVL). Residues 1726-1799 (ASSQLPSDGG…PLPEVDKVVL (74 aa)) form a disordered region. 3 stretches are compositionally biased toward gly residues: residues 1733–1744 (DGGGGSGDGPGP), 1752–1763 (LGGGGTGGGSGI), and 1775–1786 (SGAGPGGGGGSS).

Its subcellular location is the cell membrane. Functionally, cadherins are calcium-dependent cell adhesion proteins. They preferentially interact with themselves in a homophilic manner in connecting cells. The protein is Putative neural-cadherin 2 (CadN2) of Drosophila melanogaster (Fruit fly).